The primary structure comprises 65 residues: Small ribosomal subunit protein bS21 (65 aa).

The protein belongs to the bacterial ribosomal protein bS21 family.

In Chlorobium chlorochromatii (strain CaD3), this protein is Small ribosomal subunit protein bS21.